The sequence spans 362 residues: C-C chemokine receptor type 10 (362 aa).

Over 1–52 (MGTEATEQVSWGHYSGDEEDAYSAEPLPELCYKADVQAFSRAFQPSVSLTVA) the chain is Extracellular. The helical transmembrane segment at 53–68 (ALGLAGNGLVLATHLA) threads the bilayer. The Cytoplasmic portion of the chain corresponds to 69–78 (ARRAARSPTS). A helical transmembrane segment spans residues 79–99 (AHLLQLALADLLLALTLPFAA). Residues 100–114 (AGALQGWSLGSATCR) are Extracellular-facing. An intrachain disulfide couples cysteine 113 to cysteine 191. The chain crosses the membrane as a helical span at residues 115-136 (TISGLYSASFHAGFLFLACISA). The Cytoplasmic portion of the chain corresponds to 137–159 (DRYVAIARALPAGPRPSTPGRAH). The helical transmembrane segment at 160 to 179 (LVSVIVWLLSLLLALPALLF) threads the bilayer. Residues 180–203 (SQDGQREGQRRCRLIFPEGLTQTV) are Extracellular-facing. Residues 204–225 (KGASAVAQVALGFALPLGVMVA) traverse the membrane as a helical segment. The Cytoplasmic portion of the chain corresponds to 226–247 (CYALLGRTLLAARGPERRRALR). A helical transmembrane segment spans residues 248 to 269 (VVVALVAAFVVLQLPYSLALLL). Topologically, residues 270-290 (DTADLLAARERSCPASKRKDV) are extracellular. A helical membrane pass occupies residues 291–313 (ALLVTSGLALARCGLNPVLYAFL). Residues 314–362 (GLRFRQDLRRLLRGGSCPSGPQPRRGCPRRPRLSSCSAPTETHSLSWDN) are Cytoplasmic-facing. Over residues 328–338 (GSCPSGPQPRR) the composition is skewed to low complexity. The segment at 328–362 (GSCPSGPQPRRGCPRRPRLSSCSAPTETHSLSWDN) is disordered. Polar residues predominate over residues 351–362 (APTETHSLSWDN).

Belongs to the G-protein coupled receptor 1 family. Expressed at high levels in adult testis, small intestine, fetal lung, fetal kidney. Weaker expression was observed in many other adult tissues including spleen, thymus, lymph node, Peyer patches, colon, heart, ovary, peripheral blood lymphocytes, thyroid and spinal cord. Also expressed by melanocytes, dermal fibroblasts, dermal microvascular endothelial cells. Also detected in T-cells and in skin-derived Langerhans cells.

Its subcellular location is the cell membrane. Functionally, receptor for chemokines SCYA27 and SCYA28. Subsequently transduces a signal by increasing the intracellular calcium ions level and stimulates chemotaxis in a pre-B cell line. The polypeptide is C-C chemokine receptor type 10 (CCR10) (Homo sapiens (Human)).